A 100-amino-acid polypeptide reads, in one-letter code: MLLDFLDQLFSRHSGNSRQQAKQRLKLILAHDRADLTPAALESMRLEILGVVSRYVELDSEGMQFHLATEGGTTALIANLPIRRVKPLETGLSRSEGEKA.

Belongs to the MinE family.

Its function is as follows. Prevents the cell division inhibition by proteins MinC and MinD at internal division sites while permitting inhibition at polar sites. This ensures cell division at the proper site by restricting the formation of a division septum at the midpoint of the long axis of the cell. The polypeptide is Cell division topological specificity factor (Synechococcus sp. (strain JA-2-3B'a(2-13)) (Cyanobacteria bacterium Yellowstone B-Prime)).